A 205-amino-acid polypeptide reads, in one-letter code: Putative 3-methyladenine DNA glycosylase (205 aa).

The protein belongs to the DNA glycosylase MPG family.

This Clostridium perfringens (strain SM101 / Type A) protein is Putative 3-methyladenine DNA glycosylase.